The chain runs to 416 residues: Cysteate synthase (416 aa).

The residue at position 104 (Lys104) is an N6-(pyridoxal phosphate)lysine. Residue Asn130 coordinates pyridoxal 5'-phosphate.

The protein belongs to the threonine synthase family. Cysteate synthase subfamily. In terms of assembly, homotrimer. The cofactor is pyridoxal 5'-phosphate.

The catalysed reaction is O-phospho-L-serine + sulfite + H(+) = L-cysteate + phosphate. The protein operates within cofactor biosynthesis; coenzyme M biosynthesis. Its function is as follows. Specifically catalyzes the beta-elimination of phosphate from L-phosphoserine and the beta-addition of sulfite to the dehydroalanine intermediate to produce L-cysteate. The chain is Cysteate synthase from Methanosarcina mazei (strain ATCC BAA-159 / DSM 3647 / Goe1 / Go1 / JCM 11833 / OCM 88) (Methanosarcina frisia).